A 332-amino-acid chain; its full sequence is Alanine racemase (332 aa).

K33 acts as the Proton acceptor; specific for D-alanine in catalysis. K33 is subject to N6-(pyridoxal phosphate)lysine. R115 contacts substrate. The Proton acceptor; specific for L-alanine role is filled by Y245. Residue M286 participates in substrate binding.

Belongs to the alanine racemase family. Pyridoxal 5'-phosphate serves as cofactor.

The catalysed reaction is L-alanine = D-alanine. It participates in amino-acid biosynthesis; D-alanine biosynthesis; D-alanine from L-alanine: step 1/1. Its function is as follows. Catalyzes the interconversion of L-alanine and D-alanine. May also act on other amino acids. The protein is Alanine racemase (alr) of Nitratiruptor sp. (strain SB155-2).